The chain runs to 619 residues: Zinc finger protein 131 (619 aa).

In terms of domain architecture, BTB spans 34 to 98 (TDITLIVDGH…TYTAKLMIQG (65 aa)). The Nuclear localization signal 1 signature appears at 137 to 148 (TGKNEAKKRKIA). Serine 231 is modified (phosphoserine). 3 consecutive C2H2-type zinc fingers follow at residues 261–283 (FHCEKCNRSFKLFYHFKEHMKSH), 288–311 (FKCEICNKRYLRESAWKQHLNCYH), and 328–350 (HICQYCDKQFDHFGHFKEHLRKH). Glycyl lysine isopeptide (Lys-Gly) (interchain with G-Cter in SUMO2) cross-links involve residues lysine 289 and lysine 295. Residues 317-328 (VSKKQRTGKKIH) carry the Nuclear localization signal 2 motif. A C2H2-type 4; degenerate zinc finger spans residues 356-381 (FECSNCHERFARNSTLKCHLTACQTG). 2 C2H2-type zinc fingers span residues 392 to 414 (YECQVCNSVFNSWDQFKDHLVIH) and 420 to 443 (NHCTLCDLWFMQGNELRRHLSDAH). Basic and acidic residues-rich tracts occupy residues 574–587 (QEEREPNHADAAME) and 595–612 (LETKPSEYSQARKTENDR). Positions 574 to 619 (QEEREPNHADAAMEEHEDAEGLETKPSEYSQARKTENDRTSLPVLE) are disordered. Lysine 598 is covalently cross-linked (Glycyl lysine isopeptide (Lys-Gly) (interchain with G-Cter in SUMO)).

The protein belongs to the krueppel C2H2-type zinc-finger protein family. In terms of processing, monosumoylated at Lys-598 by CBX4 and UHRF2. Sumoylation may potentiate ZNF131 inhibition of estrogen signaling. Sumoylation does not interfere with ubiquitination. Post-translationally, ubiquitinated. Ubiquitously expressed. Predominant expression is found in the developing central nervous system with strongest signals in the forebrain, midbrain, and hindbrain areas and in the neural tube.

It localises to the nucleus. Functionally, may be involved in transcriptional regulation as a repressor of ESR1/ER-alpha signaling. Plays a role during development and organogenesis as well as in the function of the adult central nervous system. The chain is Zinc finger protein 131 (Znf131) from Mus musculus (Mouse).